The primary structure comprises 96 residues: Phosphoribosyl-ATP pyrophosphatase (96 aa).

It belongs to the PRA-PH family.

It is found in the cytoplasm. The enzyme catalyses 1-(5-phospho-beta-D-ribosyl)-ATP + H2O = 1-(5-phospho-beta-D-ribosyl)-5'-AMP + diphosphate + H(+). It participates in amino-acid biosynthesis; L-histidine biosynthesis; L-histidine from 5-phospho-alpha-D-ribose 1-diphosphate: step 2/9. This is Phosphoribosyl-ATP pyrophosphatase from Methanococcus vannielii (strain ATCC 35089 / DSM 1224 / JCM 13029 / OCM 148 / SB).